A 548-amino-acid chain; its full sequence is Phosphoglucomutase (548 aa).

Ser135 functions as the Phosphoserine intermediate in the catalytic mechanism. Residues Ser135, Asp288, Asp290, and Asp292 each contribute to the Mg(2+) site.

Belongs to the phosphohexose mutase family. Mg(2+) serves as cofactor.

The catalysed reaction is alpha-D-glucose 1-phosphate = alpha-D-glucose 6-phosphate. It functions in the pathway glycolipid metabolism; diglucosyl-diacylglycerol biosynthesis. In terms of biological role, catalyzes the interconversion between glucose-6-phosphate and alpha-glucose-1-phosphate. This is the first step in the biosynthesis of diglucosyl-diacylglycerol (Glc2-DAG), i.e. a glycolipid found in the membrane, which is also used as a membrane anchor for lipoteichoic acid (LTA). In Staphylococcus haemolyticus (strain JCSC1435), this protein is Phosphoglucomutase (pgcA).